The sequence spans 354 residues: Phosphoribosylformylglycinamidine cyclo-ligase (354 aa).

This sequence belongs to the AIR synthase family.

It is found in the cytoplasm. It catalyses the reaction 2-formamido-N(1)-(5-O-phospho-beta-D-ribosyl)acetamidine + ATP = 5-amino-1-(5-phospho-beta-D-ribosyl)imidazole + ADP + phosphate + H(+). It participates in purine metabolism; IMP biosynthesis via de novo pathway; 5-amino-1-(5-phospho-D-ribosyl)imidazole from N(2)-formyl-N(1)-(5-phospho-D-ribosyl)glycinamide: step 2/2. This Marinobacter nauticus (strain ATCC 700491 / DSM 11845 / VT8) (Marinobacter aquaeolei) protein is Phosphoribosylformylglycinamidine cyclo-ligase.